Reading from the N-terminus, the 469-residue chain is Proline--tRNA ligase (469 aa).

This sequence belongs to the class-II aminoacyl-tRNA synthetase family. ProS type 3 subfamily. In terms of assembly, homodimer.

Its subcellular location is the cytoplasm. It carries out the reaction tRNA(Pro) + L-proline + ATP = L-prolyl-tRNA(Pro) + AMP + diphosphate. Catalyzes the attachment of proline to tRNA(Pro) in a two-step reaction: proline is first activated by ATP to form Pro-AMP and then transferred to the acceptor end of tRNA(Pro). In Methanosphaera stadtmanae (strain ATCC 43021 / DSM 3091 / JCM 11832 / MCB-3), this protein is Proline--tRNA ligase.